Here is a 1022-residue protein sequence, read N- to C-terminus: Protein trachealess (1022 aa).

Residues Leu-86 to Arg-139 form the bHLH domain. A PAS 1 domain is found at Glu-174–Gly-244. The disordered stretch occupies residues Leu-239–Ala-289. The span at Ser-243–Met-265 shows a compositional bias: gly residues. A compositionally biased stretch (polar residues) spans His-280–Ala-289. One can recognise a PAS 2 domain in the interval Pro-391–Gly-461. A PAC domain is found at Thr-465–Arg-508. Disordered regions lie at residues Asp-525–Ala-686, Ala-849–Val-896, and Asp-962–Ala-996. Composition is skewed to low complexity over residues Arg-578–Ser-587 and Pro-611–Val-625. Residues Lys-629–Ala-636 carry the Nuclear localization signal motif. Ser-673 bears the Phosphoserine; by PKB/Akt1 mark. Polar residues predominate over residues Thr-851 to Pro-864. The segment covering Gly-987–Ala-996 has biased composition (low complexity).

As to quaternary structure, efficient DNA binding requires dimerization with another bHLH protein. Heterodimer with tgo. Post-translationally, ser-673 phosphorylation by PKB/Akt1 is required for nuclear targeting and transcriptional activity. In terms of tissue distribution, trachea, salivary gland ducts, posterior spiracles (Filzkoeper primordia) and a subset of cells in the CNS.

It is found in the nucleus. Functionally, transcription factor, master regulator of tracheal cell fates in the embryo, necessary for the development of the salivary gland duct, Malpighian tubules and the posterior spiracles. It may induce a general fate of branched tubular structures of epithelial origin. Functions with tgo to regulate expression of btl. The protein is Protein trachealess (trh) of Drosophila melanogaster (Fruit fly).